A 197-amino-acid polypeptide reads, in one-letter code: SERTA domain-containing protein 3 (197 aa).

A disordered region spans residues 1–23 (MGGLKRKHSDLEEEEEEEKWDWS). The region spanning 27 to 74 (LRSYQQALLRISLDKVQRSLGPRAPSLRRHVLIHNTLQQLQAAIRLAP) is the SERTA domain.

Interacts with RPA2.

The protein resides in the nucleus. Its subcellular location is the nucleolus. Antiviral interferon-stimulated protein that plays a role in innate immunity and in the suppression of viruses through different mechanisms. Plays a role in the late phase response of TLR-induced immune effector expression. Strong transcriptional coactivator. This Mus musculus (Mouse) protein is SERTA domain-containing protein 3 (Sertad3).